We begin with the raw amino-acid sequence, 202 residues long: Mitochondrial import receptor subunit TOM20-3 (202 aa).

Residue Met-1 is modified to N-acetylmethionine. Residues 1-174 are Cytoplasmic-facing; it reads MDTETEFDRI…NKKSSDAKYD (174 aa). 2 TPR repeats span residues 38–74 and 86–119; these read GGVL…DPKK and TSFA…QPDN. The disordered stretch occupies residues 146 to 166; that stretch reads SQPMGRVEAPAPPSSKAVKNK. The helical transmembrane segment at 175–192 threads the bilayer; sequence AMGWVILAIGVVAWISFA. Over 193–202 the chain is Mitochondrial intermembrane; that stretch reads KANVPVSPPR.

It belongs to the Tom20 family. In terms of assembly, forms part of the preprotein translocase complex of the outer mitochondrial membrane (TOM complex) which consists of at least 6 different proteins (TOM5, TOM6, TOM7, TOM20, TOM22/TOM9 and TOM40). Component of a mitochondrial large protein complex that contains, at least, MIC60, DGS1, TOM40, TOM20 proteins, and petC/RISP. The N-terminus is blocked. Expressed in roots, flowers, young cotyledons and leaves.

It is found in the mitochondrion outer membrane. Functionally, central component of the receptor complex responsible for the recognition and translocation of cytosolically synthesized mitochondrial preproteins. Together with TOM22 functions as the transit peptide receptor at the surface of the mitochondrion outer membrane and facilitates the movement of preproteins into the translocation pore. The protein is Mitochondrial import receptor subunit TOM20-3 of Arabidopsis thaliana (Mouse-ear cress).